The sequence spans 264 residues: MIQYHDLLERILSDGTEKHDRTGTGTLSVFGHQMRFNLAAGFPMLTTKRLPLKAIVHELLWFLQGDTNIKYLRDNGVTIWDEWADANGDLGPVYGAQWRSWPAADGRSIDQIANIVEMIKRNPDSRRLIVTAWNPADVDRMALPPCHCLFQFYVAGGKLSCQLYQRSADVFLGVPFNIASYALLTMMIAQVTGLKPGEFIHTLGDAHLYSNHLEQARLQLTRAPRALPEMVIDPAVKDVFGFRYEDFTLQGYDPHPHIKAEVAV.

Residues Arg-21 and 126 to 127 (RR) contribute to the dUMP site. Residue Cys-146 is the Nucleophile of the active site. DUMP contacts are provided by residues 166–169 (RSAD), Asn-177, and 207–209 (HLY). Asp-169 is a (6R)-5,10-methylene-5,6,7,8-tetrahydrofolate binding site. (6R)-5,10-methylene-5,6,7,8-tetrahydrofolate is bound at residue Ala-263.

The protein belongs to the thymidylate synthase family. Bacterial-type ThyA subfamily. Homodimer.

The protein localises to the cytoplasm. It carries out the reaction dUMP + (6R)-5,10-methylene-5,6,7,8-tetrahydrofolate = 7,8-dihydrofolate + dTMP. Its pathway is pyrimidine metabolism; dTTP biosynthesis. In terms of biological role, catalyzes the reductive methylation of 2'-deoxyuridine-5'-monophosphate (dUMP) to 2'-deoxythymidine-5'-monophosphate (dTMP) while utilizing 5,10-methylenetetrahydrofolate (mTHF) as the methyl donor and reductant in the reaction, yielding dihydrofolate (DHF) as a by-product. This enzymatic reaction provides an intracellular de novo source of dTMP, an essential precursor for DNA biosynthesis. This is Thymidylate synthase from Rhodopseudomonas palustris (strain BisB5).